Here is a 648-residue protein sequence, read N- to C-terminus: PAN2-PAN3 deadenylation complex subunit PAN3 (648 aa).

A disordered region spans residues 1 to 24 (MAATRYPPNDLRRQVGSPRSKGRE). The segment at 24 to 53 (ENKDTLCRNILIYGNCRYEDQGCTFNHDQN) adopts a C3H1-type zinc-finger fold. Positions 244–506 (QVMPNSGLPQ…SIENFISGIA (263 aa)) are pseudokinase domain. ATP-binding positions include Arg-295, 345–352 (DYHPLSKT), and 404–405 (SK). Positions 507–545 (THMTAFFDLALQDGDEKQFHLARELENGRIARSMMKLMT) form a coiled coil. The segment at 546–648 (IIERAEPGGA…SKTGAPGANN (103 aa)) is knob domain.

Belongs to the protein kinase superfamily. PAN3 family. In terms of assembly, homodimer. Forms a heterotrimer with a catalytic subunit PAN2 to form the poly(A)-nuclease (PAN) deadenylation complex. Interacts (via PAM-2 motif) with poly(A)-binding protein PAB1 (via PABC domain), conferring substrate specificity of the enzyme complex.

The protein localises to the cytoplasm. In terms of biological role, regulatory subunit of the poly(A)-nuclease (PAN) deadenylation complex, one of two cytoplasmic mRNA deadenylases involved in mRNA turnover. PAN specifically shortens poly(A) tails of RNA and the activity is stimulated by poly(A)-binding protein PAB1. PAN deadenylation is followed by rapid degradation of the shortened mRNA tails by the CCR4-NOT complex. Deadenylated mRNAs are then degraded by two alternative mechanisms, namely exosome-mediated 3'-5' exonucleolytic degradation, or deadenylation-dependent mRNA decaping and subsequent 5'-3' exonucleolytic degradation by XRN1. May also be involved in post-transcriptional maturation of mRNA poly(A) tails. PAN3 acts as a positive regulator for PAN activity, recruiting the catalytic subunit PAN2 to mRNA via its interaction with RNA and with PAB1. This is PAN2-PAN3 deadenylation complex subunit PAN3 from Chaetomium globosum (strain ATCC 6205 / CBS 148.51 / DSM 1962 / NBRC 6347 / NRRL 1970) (Soil fungus).